The primary structure comprises 242 residues: Ribonuclease 3 (242 aa).

An RNase III domain is found at 10-146; it reads LQNFNKKFAD…FVGALYLDQG (137 aa). E59 is a Mg(2+) binding site. D63 is an active-site residue. Residues D132 and E135 each coordinate Mg(2+). E135 is a catalytic residue. The region spanning 172–241 is the DRBM domain; it reads DFKTQFQELI…AEKAYNDMKK (70 aa). The tract at residues 216–242 is disordered; sequence VAKGQGRTKKESEQKAAEKAYNDMKKK. Basic and acidic residues predominate over residues 223 to 242; it reads TKKESEQKAAEKAYNDMKKK.

The protein belongs to the ribonuclease III family. Homodimer. It depends on Mg(2+) as a cofactor.

The protein localises to the cytoplasm. The catalysed reaction is Endonucleolytic cleavage to 5'-phosphomonoester.. Its function is as follows. Digests double-stranded RNA. Involved in the processing of primary rRNA transcript to yield the immediate precursors to the large and small rRNAs (23S and 16S). Processes some mRNAs, and tRNAs when they are encoded in the rRNA operon. Processes pre-crRNA and tracrRNA of type II CRISPR loci if present in the organism. The chain is Ribonuclease 3 from Staphylococcus carnosus (strain TM300).